The primary structure comprises 20 residues: Antimicrobial peptide AJN-10 (20 aa).

It is found in the secreted. Its function is as follows. Displays antimicrobial activity against the Gram-negative bacterium A.hydrophila. This Anguilla japonica (Japanese eel) protein is Antimicrobial peptide AJN-10.